We begin with the raw amino-acid sequence, 246 residues long: Probable 2-phosphosulfolactate phosphatase (246 aa).

Belongs to the ComB family. It depends on Mg(2+) as a cofactor.

The catalysed reaction is (2R)-O-phospho-3-sulfolactate + H2O = (2R)-3-sulfolactate + phosphate. This chain is Probable 2-phosphosulfolactate phosphatase, found in Synechococcus sp. (strain WH7803).